We begin with the raw amino-acid sequence, 503 residues long: Transforming protein rel polyprotein (503 aa).

Residues Pro-16–Thr-305 form the RHD domain. Ser-275 carries the phosphoserine; by host PKA modification. 2 disordered regions span residues Arg-286 to Leu-306 and Ala-318 to Asn-342. The short motif at Lys-298–Arg-303 is the Nuclear localization signal element.

It is found in the host cytoplasm. Functionally, this transforming protein appears to have a protein-kinase activity. The chain is Transforming protein rel polyprotein (V-REL) from Galliformes.